The primary structure comprises 331 residues: Phosphoribosylformylglycinamidine cyclo-ligase (331 aa).

It belongs to the AIR synthase family.

Its subcellular location is the cytoplasm. It carries out the reaction 2-formamido-N(1)-(5-O-phospho-beta-D-ribosyl)acetamidine + ATP = 5-amino-1-(5-phospho-beta-D-ribosyl)imidazole + ADP + phosphate + H(+). It participates in purine metabolism; IMP biosynthesis via de novo pathway; 5-amino-1-(5-phospho-D-ribosyl)imidazole from N(2)-formyl-N(1)-(5-phospho-D-ribosyl)glycinamide: step 2/2. The polypeptide is Phosphoribosylformylglycinamidine cyclo-ligase (Clostridium botulinum (strain Loch Maree / Type A3)).